The sequence spans 569 residues: Sugar transporter STL1 (569 aa).

The Cytoplasmic portion of the chain corresponds to 1 to 29 (MKDLKLSNFKGKFISRTSHWGLTGKKLRY). Residues 30 to 50 (FITIASMTGFSLFGYDQGLMA) traverse the membrane as a helical segment. Residues 51 to 79 (SLITGKQFNYEFPATKENGDHDRHATVVQ) lie on the Extracellular side of the membrane. The helical transmembrane segment at 80–100 (GATTSCYELGCFAGSLFVMFC) threads the bilayer. Residues 101–107 (GERIGRK) lie on the Cytoplasmic side of the membrane. Residues 108–128 (PLILMGSVITIIGAVISTCAF) form a helical membrane-spanning segment. Position 129 (Arg129) is a topological domain, extracellular. Residues 130-150 (GYWALGQFIIGRVVTGVGTGL) traverse the membrane as a helical segment. At 151–168 (NTSTIPVWQSEMSKAENR) the chain is on the cytoplasmic side. A helical transmembrane segment spans residues 169–189 (GLLVNLEGSTIAFGTMIAYWI). Topologically, residues 190-203 (DFGLSYTNSSVQWR) are extracellular. Asn197 is a glycosylation site (N-linked (GlcNAc...) asparagine). The chain crosses the membrane as a helical span at residues 204–224 (FPVSMQIVFALFLLAFMIKLP). The Cytoplasmic portion of the chain corresponds to 225–291 (ESPRWLISQS…SRGRSQNLQR (67 aa)). A helical membrane pass occupies residues 292 to 312 (ALIAASTQFFQQFTGCNAAIY). Residues 313–330 (YSTVLFNKTIKLDYRLSM) lie on the Extracellular side of the membrane. Asn319 carries N-linked (GlcNAc...) asparagine glycosylation. Residues 331–351 (IIGGVFATIYALSTIGSFFLI) traverse the membrane as a helical segment. The Cytoplasmic portion of the chain corresponds to 352 to 358 (EKLGRRK). The helical transmembrane segment at 359-379 (LFLLGATGQAVSFTITFACLV) threads the bilayer. Over 380–389 (KENKENARGA) the chain is Extracellular. A helical transmembrane segment spans residues 390 to 410 (AVGLFLFITFFGLSLLSLPWI). Residues 411–426 (YPPEIASMKVRASTNA) are Cytoplasmic-facing. A helical transmembrane segment spans residues 427 to 447 (FSTCTNWLCNFAVVMFTPIFI). Over 448–453 (GQSGWG) the chain is Extracellular. Residues 454–474 (CYLFFAVMNYLYIPVIFFFYP) traverse the membrane as a helical segment. Residues 475–569 (ETAGRSLEEI…TVNDKANFEG (95 aa)) are Cytoplasmic-facing. Over residues 524–533 (DDEMEKEDFG) the composition is skewed to acidic residues. Residues 524–569 (DDEMEKEDFGEDRVEDTYNQINGDNSSSSSNIKNEDTVNDKANFEG) are disordered. A compositionally biased stretch (basic and acidic residues) spans 556 to 569 (KNEDTVNDKANFEG).

This sequence belongs to the major facilitator superfamily. Sugar transporter (TC 2.A.1.1) family.

It localises to the membrane. This chain is Sugar transporter STL1 (STL1), found in Saccharomyces cerevisiae (strain ATCC 204508 / S288c) (Baker's yeast).